Reading from the N-terminus, the 1228-residue chain is DNA-directed RNA polymerase subunit beta (1228 aa).

A disordered region spans residues 1175–1204 (ESVDEDEQPQGLGAFEIGGDEIEEDKEDDK). Residues 1192–1202 (GGDEIEEDKED) show a composition bias toward acidic residues.

Belongs to the RNA polymerase beta chain family. As to quaternary structure, the RNAP catalytic core consists of 2 alpha, 1 beta, 1 beta' and 1 omega subunit. When a sigma factor is associated with the core the holoenzyme is formed, which can initiate transcription.

The enzyme catalyses RNA(n) + a ribonucleoside 5'-triphosphate = RNA(n+1) + diphosphate. Its function is as follows. DNA-dependent RNA polymerase catalyzes the transcription of DNA into RNA using the four ribonucleoside triphosphates as substrates. This is DNA-directed RNA polymerase subunit beta from Caldicellulosiruptor bescii (strain ATCC BAA-1888 / DSM 6725 / KCTC 15123 / Z-1320) (Anaerocellum thermophilum).